Reading from the N-terminus, the 313-residue chain is Ribose 1,5-bisphosphate isomerase (313 aa).

Substrate is bound by residues 17 to 20 and Arg57; that span reads RGAA. Residue Cys121 is the Proton acceptor of the active site. Asp190 acts as the Proton donor in catalysis. Residues 200 to 201 and Lys226 each bind substrate; that span reads NK.

This sequence belongs to the eIF-2B alpha/beta/delta subunits family. R15P isomerase subfamily.

The enzyme catalyses alpha-D-ribose 1,5-bisphosphate = D-ribulose 1,5-bisphosphate. Catalyzes the isomerization of ribose 1,5-bisphosphate (R15P) to ribulose 1,5-bisphosphate (RuBP), the CO(2) acceptor and substrate for RubisCO. Functions in an archaeal AMP degradation pathway, together with AMP phosphorylase and RubisCO. The sequence is that of Ribose 1,5-bisphosphate isomerase from Archaeoglobus fulgidus (strain ATCC 49558 / DSM 4304 / JCM 9628 / NBRC 100126 / VC-16).